A 206-amino-acid polypeptide reads, in one-letter code: dITP/XTP pyrophosphatase (206 aa).

Residue 7–12 (SSHGYK) coordinates substrate. Catalysis depends on Asp-70, which acts as the Proton acceptor. Asp-70 serves as a coordination point for Mg(2+). Substrate-binding positions include Thr-71, 154-157 (FGYD), Lys-177, and 182-183 (HR).

This sequence belongs to the HAM1 NTPase family. In terms of assembly, homodimer. The cofactor is Mg(2+).

The enzyme catalyses XTP + H2O = XMP + diphosphate + H(+). The catalysed reaction is dITP + H2O = dIMP + diphosphate + H(+). It carries out the reaction ITP + H2O = IMP + diphosphate + H(+). In terms of biological role, pyrophosphatase that catalyzes the hydrolysis of nucleoside triphosphates to their monophosphate derivatives, with a high preference for the non-canonical purine nucleotides XTP (xanthosine triphosphate), dITP (deoxyinosine triphosphate) and ITP. Seems to function as a house-cleaning enzyme that removes non-canonical purine nucleotides from the nucleotide pool, thus preventing their incorporation into DNA/RNA and avoiding chromosomal lesions. The protein is dITP/XTP pyrophosphatase of Chlamydia pneumoniae (Chlamydophila pneumoniae).